Here is a 312-residue protein sequence, read N- to C-terminus: Ribosomal RNA small subunit methyltransferase H (312 aa).

Residues 35-37, D55, F79, D100, and Q107 contribute to the S-adenosyl-L-methionine site; that span reads GGH. A disordered region spans residues 279–312; sequence LVGKSQRPGPGEVAANPRSRSAVMRVAERTGGAA.

It belongs to the methyltransferase superfamily. RsmH family.

Its subcellular location is the cytoplasm. The catalysed reaction is cytidine(1402) in 16S rRNA + S-adenosyl-L-methionine = N(4)-methylcytidine(1402) in 16S rRNA + S-adenosyl-L-homocysteine + H(+). Specifically methylates the N4 position of cytidine in position 1402 (C1402) of 16S rRNA. The protein is Ribosomal RNA small subunit methyltransferase H of Aromatoleum aromaticum (strain DSM 19018 / LMG 30748 / EbN1) (Azoarcus sp. (strain EbN1)).